A 351-amino-acid chain; its full sequence is Dihydroorotate dehydrogenase (quinone) (351 aa).

FMN-binding positions include 67-71 (AGFDK) and Thr91. Lys71 is a substrate binding site. Residue 116-120 (NAMGF) participates in substrate binding. FMN is bound by residues Asn145 and Asn178. Asn178 contributes to the substrate binding site. The active-site Nucleophile is Ser181. Asn183 contributes to the substrate binding site. Positions 214 and 242 each coordinate FMN. 243–244 (NT) is a binding site for substrate. FMN contacts are provided by residues Gly262, Gly291, and 312–313 (YS).

This sequence belongs to the dihydroorotate dehydrogenase family. Type 2 subfamily. As to quaternary structure, monomer. Requires FMN as cofactor.

It localises to the cell membrane. The catalysed reaction is (S)-dihydroorotate + a quinone = orotate + a quinol. The protein operates within pyrimidine metabolism; UMP biosynthesis via de novo pathway; orotate from (S)-dihydroorotate (quinone route): step 1/1. In terms of biological role, catalyzes the conversion of dihydroorotate to orotate with quinone as electron acceptor. This Helicobacter pylori (strain J99 / ATCC 700824) (Campylobacter pylori J99) protein is Dihydroorotate dehydrogenase (quinone) (pyrD).